The chain runs to 397 residues: Ribosomal RNA large subunit methyltransferase I (397 aa).

Residues 2 to 80 (AIRIKLKPGR…KEETIDADFF (79 aa)) form the PUA domain.

Belongs to the methyltransferase superfamily. RlmI family.

It is found in the cytoplasm. The catalysed reaction is cytidine(1962) in 23S rRNA + S-adenosyl-L-methionine = 5-methylcytidine(1962) in 23S rRNA + S-adenosyl-L-homocysteine + H(+). Its function is as follows. Specifically methylates the cytosine at position 1962 (m5C1962) of 23S rRNA. This chain is Ribosomal RNA large subunit methyltransferase I, found in Shewanella frigidimarina (strain NCIMB 400).